The primary structure comprises 1012 residues: MPASAPPRRPRPPPPSLSLLLVLLGLGGRRLRAEPGDGAQTWARFSRPPAPEAAGLFQGTFPDGFLWAVGSAAYQTEGGWQQHGKGASIWDTFTHHPLAPPGDSRNASLPLGAPSPLQPATGDVASDSYNNVFRDTEALRELGVTHYRFSISWARVLPNGSAGVPNREGLRYYRRLLERLRELGVQPVVTLYHWDLPQRLQDAYGGWANRALADHFRDYAELCFRHFGGQVKYWITIDNPYVVAWHGYATGRLAPGIRGSPRLGYLVAHNLLLAHAKVWHLYNTSFRPTQGGQVSIALSSHWINPRRMTDHSIKECQKSLDFVLGWFAKPVFIDGDYPESMKNNLSSILPDFTESEKKFIKGTADFFALCFGPTLSFQLLDPHMKFRQLESPNLRQLLSWIDLEFNHPQIFIVENGWFVSGTTKRDDAKYMYYLKKFIMETLKAIKLDGVDVIGYTAWSLMDGFEWHRGYSIRRGLFYVDFLSQDKMLLPKSSALFYQKLIEKNGFPPLPENQPLEGTFPCDFAWGVVDNYIQVDTTLSQFTDLNVYLWDVHHSKRLIKVDGVVTKKRKSYCVDFAAIQPQIALLQEMHVTHFRFSLDWALILPLGNQSQVNHTILQYYRCMASELVRVNITPVVALWQPMAPNQGLPRLLARQGAWENPYTALAFAEYARLCFQELGHHVKLWITMNEPYTRNMTYSAGHNLLKAHALAWHVYNEKFRHAQNGKISIALQADWIEPACPFSQKDKEVAERVLEFDIGWLAEPIFGSGDYPWVMRDWLNQRNNFLLPYFTEDEKKLIQGTFDFLALSHYTTILVDSEKEDPIKYNDYLEVQEMTDITWLNSPSQVAVVPWGLRKVLNWLKFKYGDLPMYIISNGIDDGLHAEDDQLRVYYMQNYINEALKAHILDGINLCGYFAYSFNDRTAPRFGLYRYAADQFEPKASMKHYRKIIDSNGFPGPETLERFCPEEFTVCTECSFFHTRKSLLAFIAFLFFASIISLSLIFYYSKKGRRSYK.

The N-terminal stretch at 1-33 (MPASAPPRRPRPPPPSLSLLLVLLGLGGRRLRA) is a signal peptide. At 34–981 (EPGDGAQTWA…ECSFFHTRKS (948 aa)) the chain is on the extracellular side. Glycosyl hydrolase-1 regions lie at residues 57–506 (FQGT…KNGF) and 515–953 (LEGT…SNGF). Residues N106, N159, N283, N344, N607, N612, and N694 are each glycosylated (N-linked (GlcNAc...) asparagine). A helical membrane pass occupies residues 982 to 1002 (LLAFIAFLFFASIISLSLIFY). Residues 1003 to 1012 (YSKKGRRSYK) lie on the Cytoplasmic side of the membrane.

Belongs to the glycosyl hydrolase 1 family. Klotho subfamily. In terms of assembly, homodimer. Interacts with FGF23 and FGFR1. Post-translationally, N-glycosylated. As to expression, present in cortical renal tubules (at protein level). Soluble peptide is present in serum and cerebrospinal fluid. Expressed in kidney, placenta, small intestine and prostate. Down-regulated in renal cell carcinomas, hepatocellular carcinomas, and in chronic renal failure kidney.

Its subcellular location is the cell membrane. It localises to the apical cell membrane. It is found in the secreted. The catalysed reaction is a beta-D-glucuronoside + H2O = D-glucuronate + an alcohol. Its function is as follows. May have weak glycosidase activity towards glucuronylated steroids. However, it lacks essential active site Glu residues at positions 239 and 872, suggesting it may be inactive as a glycosidase in vivo. May be involved in the regulation of calcium and phosphorus homeostasis by inhibiting the synthesis of active vitamin D. Essential factor for the specific interaction between FGF23 and FGFR1. In terms of biological role, the Klotho peptide generated by cleavage of the membrane-bound isoform may be an anti-aging circulating hormone which would extend life span by inhibiting insulin/IGF1 signaling. The protein is Klotho (KL) of Homo sapiens (Human).